The primary structure comprises 170 residues: tRNA-splicing endonuclease (170 aa).

Residues tyrosine 110, histidine 116, and lysine 147 contribute to the active site.

Belongs to the tRNA-intron endonuclease family. Archaeal short subfamily. Homotetramer; although the tetramer contains four active sites, only two participate in the cleavage. Therefore, it should be considered as a dimer of dimers.

The catalysed reaction is pretRNA = a 3'-half-tRNA molecule with a 5'-OH end + a 5'-half-tRNA molecule with a 2',3'-cyclic phosphate end + an intron with a 2',3'-cyclic phosphate and a 5'-hydroxyl terminus.. Endonuclease that removes tRNA introns. Cleaves pre-tRNA at the 5'- and 3'-splice sites to release the intron. The products are an intron and two tRNA half-molecules bearing 2',3' cyclic phosphate and 5'-OH termini. Recognizes a pseudosymmetric substrate in which 2 bulged loops of 3 bases are separated by a stem of 4 bp. This is tRNA-splicing endonuclease from Pyrococcus furiosus (strain ATCC 43587 / DSM 3638 / JCM 8422 / Vc1).